The primary structure comprises 188 residues: Ribosome maturation factor RimM (188 aa).

The PRC barrel domain maps to 96 to 169 (DDEFYYADLE…TLLIDPLAAG (74 aa)).

Belongs to the RimM family. Binds ribosomal protein uS19.

It is found in the cytoplasm. An accessory protein needed during the final step in the assembly of 30S ribosomal subunit, possibly for assembly of the head region. Essential for efficient processing of 16S rRNA. May be needed both before and after RbfA during the maturation of 16S rRNA. It has affinity for free ribosomal 30S subunits but not for 70S ribosomes. The chain is Ribosome maturation factor RimM from Rhizobium etli (strain ATCC 51251 / DSM 11541 / JCM 21823 / NBRC 15573 / CFN 42).